A 953-amino-acid chain; its full sequence is Translation initiation factor IF-2 (953 aa).

2 disordered regions span residues 48–248 (SSFS…AELA) and 279–363 (TKLK…TERK). 3 stretches are compositionally biased toward basic and acidic residues: residues 80–89 (TGSEHAEKTQ), 98–111 (FKAEREARAKEQAA), and 140–188 (QGDK…ENHK). Polar residues predominate over residues 191–207 (RFTNQKKQGRQEPQSKS). Residues 229-248 (RQSETRFRAQQEAKRLAELA) are compositionally biased toward basic and acidic residues. The segment covering 282–291 (KSSNISAKST) has biased composition (polar residues). Basic and acidic residues predominate over residues 300-317 (ARPEKNRELTHHSQEGQK). A compositionally biased stretch (low complexity) spans 322–338 (SWNSQNQVRNQKNSNWN). Over residues 339 to 348 (KNKKTKKGKN) the composition is skewed to basic residues. The region spanning 454–623 (ERAPVVTIMG…LLVAEVEELK (170 aa)) is the tr-type G domain. A G1 region spans residues 463-470 (GHVDHGKT). 463–470 (GHVDHGKT) is a GTP binding site. Residues 488 to 492 (GITQH) are G2. The segment at 509–512 (DTPG) is G3. GTP-binding positions include 509-513 (DTPGH) and 563-566 (NKID). The tract at residues 563 to 566 (NKID) is G4. A G5 region spans residues 599–601 (SAK).

The protein belongs to the TRAFAC class translation factor GTPase superfamily. Classic translation factor GTPase family. IF-2 subfamily.

Its subcellular location is the cytoplasm. In terms of biological role, one of the essential components for the initiation of protein synthesis. Protects formylmethionyl-tRNA from spontaneous hydrolysis and promotes its binding to the 30S ribosomal subunits. Also involved in the hydrolysis of GTP during the formation of the 70S ribosomal complex. The protein is Translation initiation factor IF-2 of Streptococcus pyogenes serotype M18 (strain MGAS8232).